The chain runs to 342 residues: tRNA N6-adenosine threonylcarbamoyltransferase (342 aa).

Positions 115 and 119 each coordinate Fe cation. Substrate is bound by residues 138–142 (IISGG), Asp171, Gly184, Asp188, and Asn276. Residue Asp304 coordinates Fe cation.

This sequence belongs to the KAE1 / TsaD family. It depends on Fe(2+) as a cofactor.

The protein resides in the cytoplasm. The catalysed reaction is L-threonylcarbamoyladenylate + adenosine(37) in tRNA = N(6)-L-threonylcarbamoyladenosine(37) in tRNA + AMP + H(+). In terms of biological role, required for the formation of a threonylcarbamoyl group on adenosine at position 37 (t(6)A37) in tRNAs that read codons beginning with adenine. Is involved in the transfer of the threonylcarbamoyl moiety of threonylcarbamoyl-AMP (TC-AMP) to the N6 group of A37, together with TsaE and TsaB. TsaD likely plays a direct catalytic role in this reaction. In Endomicrobium trichonymphae, this protein is tRNA N6-adenosine threonylcarbamoyltransferase.